Reading from the N-terminus, the 289-residue chain is Glucosamine-6-phosphate deaminase 1 (289 aa).

Position 64 is an N6-acetyllysine (lysine 64). Aspartate 72 acts as the Proton acceptor; for enolization step in catalysis. The active-site For ring-opening step is the aspartate 141. The active-site Proton acceptor; for ring-opening step is the histidine 143. The For ring-opening step role is filled by glutamate 148. Threonine 161 bears the Phosphothreonine mark.

The protein belongs to the glucosamine/galactosamine-6-phosphate isomerase family. As to quaternary structure, homohexamer. At the equatorial segment of the sperm head.

The protein resides in the cytoplasm. It catalyses the reaction alpha-D-glucosamine 6-phosphate + H2O = beta-D-fructose 6-phosphate + NH4(+). Its pathway is nucleotide-sugar biosynthesis; UDP-N-acetyl-alpha-D-glucosamine biosynthesis; alpha-D-glucosamine 6-phosphate from D-fructose 6-phosphate: step 1/1. Its activity is regulated as follows. Allosterically activated by N-acetylglucosamine-6-phosphate (GlcNAc6P). Its function is as follows. Catalyzes the reversible conversion of alpha-D-glucosamine 6-phosphate (GlcN-6P) into beta-D-fructose 6-phosphate (Fru-6P) and ammonium ion, a regulatory reaction step in de novo uridine diphosphate-N-acetyl-alpha-D-glucosamine (UDP-GlcNAc) biosynthesis via hexosamine pathway. Deamination is coupled to aldo-keto isomerization mediating the metabolic flux from UDP-GlcNAc toward Fru-6P. At high ammonium level can drive amination and isomerization of Fru-6P toward hexosamines and UDP-GlcNAc synthesis. Has a role in fine tuning the metabolic fluctuations of cytosolic UDP-GlcNAc and their effects on hyaluronan synthesis that occur during tissue remodeling. Seems to trigger calcium oscillations in mammalian eggs. These oscillations serve as the essential trigger for egg activation and early development of the embryo. In Mesocricetus auratus (Golden hamster), this protein is Glucosamine-6-phosphate deaminase 1.